A 94-amino-acid polypeptide reads, in one-letter code: Large ribosomal subunit protein bL28 (94 aa).

The segment at 1–21 (MARRCEVTGRGTVSGNNVSHS) is disordered. Residues 11–20 (GTVSGNNVSH) are compositionally biased toward polar residues.

This sequence belongs to the bacterial ribosomal protein bL28 family.

This Leptospira borgpetersenii serovar Hardjo-bovis (strain JB197) protein is Large ribosomal subunit protein bL28.